Consider the following 133-residue polypeptide: Small ribosomal subunit protein uS8 (133 aa).

Positions 1–28 (MANHDPISDMLTRIRNASEKRHEKTKVP) are disordered. Basic and acidic residues predominate over residues 16–26 (NASEKRHEKTK).

The protein belongs to the universal ribosomal protein uS8 family. In terms of assembly, part of the 30S ribosomal subunit. Contacts proteins S5 and S12.

One of the primary rRNA binding proteins, it binds directly to 16S rRNA central domain where it helps coordinate assembly of the platform of the 30S subunit. This is Small ribosomal subunit protein uS8 from Prochlorococcus marinus (strain NATL1A).